A 546-amino-acid chain; its full sequence is Phenylalanine--tRNA ligase beta subunit (546 aa).

Residues 266–342 (LAPAERVVSV…IAYGIENFDA (77 aa)) form the B5 domain. Positions 320, 326, 329, and 330 each coordinate Mg(2+).

Belongs to the phenylalanyl-tRNA synthetase beta subunit family. Type 2 subfamily. In terms of assembly, tetramer of two alpha and two beta subunits. Mg(2+) serves as cofactor.

It is found in the cytoplasm. It carries out the reaction tRNA(Phe) + L-phenylalanine + ATP = L-phenylalanyl-tRNA(Phe) + AMP + diphosphate + H(+). In Methanoculleus marisnigri (strain ATCC 35101 / DSM 1498 / JR1), this protein is Phenylalanine--tRNA ligase beta subunit.